Consider the following 456-residue polypeptide: Glutathione reductase (456 aa).

Residues Ser-14, Gly-15, Glu-34, Thr-41, Cys-42, and Lys-50 each contribute to the FAD site. Ser-14 is a binding site for glutathione. Residues Cys-42 and Cys-47 are joined by a disulfide bond. Tyr-99 is a binding site for glutathione. FAD is bound at residue Gly-115. The NADP(+) site is built by Ala-180, Ile-183, Glu-186, Arg-203, Arg-209, and Gly-267. Asp-308 contacts FAD. Glu-315 contributes to the NADP(+) binding site. An FAD-binding site is contributed by Thr-317. Arg-325 contacts glutathione. Val-348 provides a ligand contact to NADP(+). His-445 provides a ligand contact to FAD. Catalysis depends on His-445, which acts as the Proton acceptor.

The protein belongs to the class-I pyridine nucleotide-disulfide oxidoreductase family. As to quaternary structure, homodimer. FAD serves as cofactor.

It localises to the cytoplasm. The catalysed reaction is 2 glutathione + NADP(+) = glutathione disulfide + NADPH + H(+). Its function is as follows. Catalyzes the reduction of glutathione disulfide (GSSG) to reduced glutathione (GSH). Constitutes the major mechanism to maintain a high GSH:GSSG ratio in the cytosol. The protein is Glutathione reductase (gor) of Haemophilus influenzae (strain ATCC 51907 / DSM 11121 / KW20 / Rd).